The primary structure comprises 1479 residues: Type VII secretion system protein EssC (1479 aa).

The Cytoplasmic segment spans residues 1 to 229 (MHKLIIKYNK…RPPQPIQKNN (229 aa)). A helical membrane pass occupies residues 230–252 (TVIWRSIIPPLVMIALTVVIFLV). At 253–256 (RPIG) the chain is on the extracellular side. Residues 257–279 (IYILMMIGMSSVTIVFGITTYFS) traverse the membrane as a helical segment. Residues 280 to 1479 (EKKKYNKDVE…QAYQKIRWFK (1200 aa)) are Cytoplasmic-facing. 2 FtsK domains span residues 652–846 (DDIL…QDSN) and 997–1183 (QGPM…SEVS). ATP is bound by residues 672–679 (GTTGSGKS) and 1014–1021 (GSPGYGRT).

It belongs to the EssC family. In terms of assembly, homooligomer. Interacts with EsaE.

The protein localises to the cell membrane. Its function is as follows. Component of the type VII secretion system (Ess). Required for the secretion of substrates including EsxA and EsxB. However, unable to support secretion of the substrate protein EsxC. In Staphylococcus aureus (strain MSSA476), this protein is Type VII secretion system protein EssC.